Reading from the N-terminus, the 183-residue chain is Archaemetzincin (183 aa).

H131 serves as a coordination point for Zn(2+). The Proton acceptor role is filled by E132. Positions 135, 141, 142, 147, 166, and 169 each coordinate Zn(2+).

The protein belongs to the peptidase M54 family. Monomer. It depends on Zn(2+) as a cofactor.

In terms of biological role, probable zinc metalloprotease whose natural substrate is unknown. In Saccharolobus islandicus (strain Y.N.15.51 / Yellowstone #2) (Sulfolobus islandicus), this protein is Archaemetzincin.